A 1036-amino-acid chain; its full sequence is Ephrin type-A receptor 6 (1036 aa).

Positions 1-22 (MGGCEVREFLLQFGFFLPLLTA) are cleaved as a signal peptide. Residues 23–550 (WPGDCSHVSN…MAAEQGQILV (528 aa)) are Extracellular-facing. The 179-residue stretch at 34 to 212 (QVVLLDTTTV…FYKKCPFTVR (179 aa)) folds into the Eph LBD domain. Fibronectin type-III domains lie at 331–441 (PPSA…TDQD) and 442–537 (APSL…TGDE). Residues Asn343, Asn397, and Asn410 are each glycosylated (N-linked (GlcNAc...) asparagine). A helical membrane pass occupies residues 551–571 (IATAAVGGFTLLVILTLFFLI). Residues 572–1036 (TGRCQWYIKA…MHIQEKGFHV (465 aa)) lie on the Cytoplasmic side of the membrane. Phosphotyrosine; by autocatalysis is present on residues Tyr606 and Tyr612. The region spanning 631–944 (IRIERVIGAG…RNPSALHTLV (314 aa)) is the Protein kinase domain. ATP is bound by residues 637–645 (IGAGEFGEV) and Lys663. Asp798 (proton acceptor) is an active-site residue. Tyr831 and Tyr978 each carry phosphotyrosine; by autocatalysis. The SAM domain maps to 961–1025 (PLFVTVGDWL…VSSIQTLRLH (65 aa)). The short motif at 1034-1036 (FHV) is the PDZ-binding element.

The protein belongs to the protein kinase superfamily. Tyr protein kinase family. Ephrin receptor subfamily. Heterotetramer upon binding of the ligand. The heterotetramer is composed of an ephrin dimer and a receptor dimer. Oligomerization is probably required to induce biological responses. Interacts (via SAM domain) with ANKS1A (via SAM domain). As to expression, expressed in brain and testis.

It is found in the membrane. The enzyme catalyses L-tyrosyl-[protein] + ATP = O-phospho-L-tyrosyl-[protein] + ADP + H(+). Functionally, receptor tyrosine kinase which binds promiscuously GPI-anchored ephrin-A family ligands residing on adjacent cells, leading to contact-dependent bidirectional signaling into neighboring cells. The signaling pathway downstream of the receptor is referred to as forward signaling while the signaling pathway downstream of the ephrin ligand is referred to as reverse signaling. This is Ephrin type-A receptor 6 (EPHA6) from Homo sapiens (Human).